Reading from the N-terminus, the 2073-residue chain is Fatty acid synthase subunit beta (2073 aa).

Positions 1-459 (MVEAEQVHQS…VYSTDDAGDL (459 aa)) are acetyltransferase. Residue S270 is the For acetyltransferase activity of the active site. Residues 470–858 (ALAVMITEKV…TRGIMFWKEL (389 aa)) form an enoyl reductase region. S1122 carries the phosphoserine modification. Residues 1155–1644 (GPEYTWFRAI…LPNTELITKL (490 aa)) form a dehydratase region. H1361 (for dehydratase activity) is an active-site residue. Residues 1558–1667 (PVFVTPPTNS…VEVLNQETSE (110 aa)) enclose the MaoC-like domain. Residues 1645–2073 (SHTGMINGRK…LQNWDEYESS (429 aa)) are malonyl/palmitoyl transferase. Residue S1828 is the For malonyltransferase activity of the active site. S2073 bears the Phosphoserine mark.

The protein belongs to the fungal fatty acid synthetase subunit beta family. As to quaternary structure, [Alpha(6)beta(6)] hexamers of two multifunctional subunits (alpha and beta).

The catalysed reaction is acetyl-CoA + n malonyl-CoA + 2n NADPH + 4n H(+) = a long-chain-acyl-CoA + n CoA + n CO2 + 2n NADP(+).. The enzyme catalyses holo-[ACP] + acetyl-CoA = acetyl-[ACP] + CoA. It carries out the reaction holo-[ACP] + malonyl-CoA = malonyl-[ACP] + CoA. It catalyses the reaction a (3R)-hydroxyacyl-[ACP] = a (2E)-enoyl-[ACP] + H2O. The catalysed reaction is a 2,3-saturated acyl-[ACP] + NAD(+) = a (2E)-enoyl-[ACP] + NADH + H(+). The enzyme catalyses (9Z)-octadecenoyl-[ACP] + H2O = (9Z)-octadecenoate + holo-[ACP] + H(+). Functionally, fatty acid synthetase catalyzes the formation of long-chain fatty acids from acetyl-CoA, malonyl-CoA and NADPH. The beta subunit contains domains for: [acyl-carrier-protein] acetyltransferase and malonyltransferase, S-acyl fatty acid synthase thioesterase, enoyl-[acyl-carrier-protein] reductase, and 3-hydroxypalmitoyl-[acyl-carrier-protein] dehydratase. The protein is Fatty acid synthase subunit beta (fas1) of Schizosaccharomyces pombe (strain 972 / ATCC 24843) (Fission yeast).